Reading from the N-terminus, the 177-residue chain is MSRVAKNPVKLPSGVEVKFAGQQLSVKGAKGTLELNVHSSVEVTEESGELRFVARNGDQQARAMAGTTRALVNNMVQGVSQGFERKLQLVGVGYKAQAKGTVLNLALGFSHPVDYELPAGITAETPSQTDILIKGIDKQLVGQVAAEIRDFRPPEPYKGKGVRYADEVVRRKEAKKK.

It belongs to the universal ribosomal protein uL6 family. In terms of assembly, part of the 50S ribosomal subunit.

In terms of biological role, this protein binds to the 23S rRNA, and is important in its secondary structure. It is located near the subunit interface in the base of the L7/L12 stalk, and near the tRNA binding site of the peptidyltransferase center. In Pseudomonas putida (strain ATCC 700007 / DSM 6899 / JCM 31910 / BCRC 17059 / LMG 24140 / F1), this protein is Large ribosomal subunit protein uL6.